The following is a 154-amino-acid chain: Ribonuclease 8 (154 aa).

An N-terminal signal peptide occupies residues Met-1–Ala-27. His-42 (proton acceptor) is an active-site residue. 2 disulfide bridges follow: Cys-64-Cys-118 and Cys-89-Cys-96. Substrate-binding positions include Lys-65–Thr-69 and Lys-90. His-149 acts as the Proton donor in catalysis.

Belongs to the pancreatic ribonuclease family.

The protein localises to the secreted. Functionally, has a low ribonuclease activity. The polypeptide is Ribonuclease 8 (RNASE8) (Chlorocebus aethiops (Green monkey)).